A 111-amino-acid chain; its full sequence is Colicin-Ia immunity protein (111 aa).

2 helical membrane-spanning segments follow: residues 33 to 53 and 85 to 105; these read LLFWCISLCGMVLYPVAKWYI and TGTVFILSLPLSMIYILSVII.

Its subcellular location is the cell membrane. In terms of biological role, this protein is able to protect a cell, which harbors the plasmid ColIa-CA53 encoding colicin Ia, against colicin Ia. The sequence is that of Colicin-Ia immunity protein from Escherichia coli.